Reading from the N-terminus, the 162-residue chain is Putative auxin-responsive protein IAA28 (162 aa).

Residues Ser-23–Ala-118 form the PB1 domain. Residues Asn-122 to Asp-141 are disordered.

This sequence belongs to the Aux/IAA family. As to quaternary structure, homodimers and heterodimers.

Its subcellular location is the nucleus. In terms of biological role, aux/IAA proteins are short-lived transcriptional factors that function as repressors of early auxin response genes at low auxin concentrations. The protein is Putative auxin-responsive protein IAA28 (IAA28) of Oryza sativa subsp. japonica (Rice).